The sequence spans 108 residues: Peptidyl-prolyl cis-trans isomerase FKBP1B (108 aa).

The PPIase FKBP-type domain maps to 20 to 108; that stretch reads GQICVVHYTG…IFDVELLNLE (89 aa).

The protein belongs to the FKBP-type PPIase family. FKBP1 subfamily. In terms of assembly, identified in a complex composed of RYR2, FKBP1B, PKA catalytic subunit, PRKAR2A, AKAP6, and the protein phosphatases PP2A and PP1. Interacts directly with RYR2. As to expression, detected in heart muscle (at protein level). Ubiquitous.

It is found in the cytoplasm. It localises to the sarcoplasmic reticulum. The enzyme catalyses [protein]-peptidylproline (omega=180) = [protein]-peptidylproline (omega=0). Inhibited by both FK506 and rapamycin. Its function is as follows. Has the potential to contribute to the immunosuppressive and toxic effects of FK506 and rapamycin. PPIases accelerate the folding of proteins. It catalyzes the cis-trans isomerization of proline imidic peptide bonds in oligopeptides. The protein is Peptidyl-prolyl cis-trans isomerase FKBP1B (Fkbp1b) of Rattus norvegicus (Rat).